We begin with the raw amino-acid sequence, 83 residues long: Cytochrome c oxidase subunit 7A2, mitochondrial (83 aa).

The N-terminal 23 residues, 1 to 23 (MLRNLLALRQIAKRTISTSSRRQ), are a transit peptide targeting the mitochondrion. Over 24 to 48 (FENKVPEKQKLFQEDNGIPVHLKGG) the chain is Mitochondrial matrix. Lysine 33 carries the post-translational modification N6-acetyllysine. A helical membrane pass occupies residues 49–77 (IADALLYRATLILTVGGTAYAMYELAVAS). At 78–83 (FPKKQD) the chain is on the mitochondrial intermembrane side.

The protein belongs to the cytochrome c oxidase VIIa family. In terms of assembly, component of the cytochrome c oxidase (complex IV, CIV), a multisubunit enzyme composed of 14 subunits. The complex is composed of a catalytic core of 3 subunits MT-CO1, MT-CO2 and MT-CO3, encoded in the mitochondrial DNA, and 11 supernumerary subunits COX4I1 (or COX4I2), COX5A, COX5B, COX6A2 (or COX6A1), COX6B1 (or COX6B2), COX6C, COX7A1 (or COX7A2), COX7B, COX7C, COX8B and NDUFA4, which are encoded in the nuclear genome. The complex exists as a monomer or a dimer and forms supercomplexes (SCs) in the inner mitochondrial membrane with NADH-ubiquinone oxidoreductase (complex I, CI) and ubiquinol-cytochrome c oxidoreductase (cytochrome b-c1 complex, complex III, CIII), resulting in different assemblies (supercomplex SCI(1)III(2)IV(1) and megacomplex MCI(2)III(2)IV(2)). Interacts with PET100.

It is found in the mitochondrion inner membrane. Its pathway is energy metabolism; oxidative phosphorylation. In terms of biological role, component of the cytochrome c oxidase, the last enzyme in the mitochondrial electron transport chain which drives oxidative phosphorylation. The respiratory chain contains 3 multisubunit complexes succinate dehydrogenase (complex II, CII), ubiquinol-cytochrome c oxidoreductase (cytochrome b-c1 complex, complex III, CIII) and cytochrome c oxidase (complex IV, CIV), that cooperate to transfer electrons derived from NADH and succinate to molecular oxygen, creating an electrochemical gradient over the inner membrane that drives transmembrane transport and the ATP synthase. Cytochrome c oxidase is the component of the respiratory chain that catalyzes the reduction of oxygen to water. Electrons originating from reduced cytochrome c in the intermembrane space (IMS) are transferred via the dinuclear copper A center (CU(A)) of subunit 2 and heme A of subunit 1 to the active site in subunit 1, a binuclear center (BNC) formed by heme A3 and copper B (CU(B)). The BNC reduces molecular oxygen to 2 water molecules using 4 electrons from cytochrome c in the IMS and 4 protons from the mitochondrial matrix. This is Cytochrome c oxidase subunit 7A2, mitochondrial (COX7A2) from Bos taurus (Bovine).